A 135-amino-acid polypeptide reads, in one-letter code: Large ribosomal subunit protein uL16c (135 aa).

This sequence belongs to the universal ribosomal protein uL16 family. As to quaternary structure, part of the 50S ribosomal subunit.

The protein resides in the plastid. It localises to the chloroplast. The protein is Large ribosomal subunit protein uL16c of Piper cenocladum (Ant piper).